The following is a 360-amino-acid chain: Phosphoserine aminotransferase (360 aa).

Arg41 lines the L-glutamate pocket. The pyridoxal 5'-phosphate site is built by Trp101, Thr152, Asp172, and Gln195. Lys196 carries the post-translational modification N6-(pyridoxal phosphate)lysine. Residue 237-238 (NT) participates in pyridoxal 5'-phosphate binding.

Belongs to the class-V pyridoxal-phosphate-dependent aminotransferase family. SerC subfamily. Homodimer. Pyridoxal 5'-phosphate is required as a cofactor.

The protein resides in the cytoplasm. It catalyses the reaction O-phospho-L-serine + 2-oxoglutarate = 3-phosphooxypyruvate + L-glutamate. The enzyme catalyses 4-(phosphooxy)-L-threonine + 2-oxoglutarate = (R)-3-hydroxy-2-oxo-4-phosphooxybutanoate + L-glutamate. The protein operates within amino-acid biosynthesis; L-serine biosynthesis; L-serine from 3-phospho-D-glycerate: step 2/3. It functions in the pathway cofactor biosynthesis; pyridoxine 5'-phosphate biosynthesis; pyridoxine 5'-phosphate from D-erythrose 4-phosphate: step 3/5. In terms of biological role, catalyzes the reversible conversion of 3-phosphohydroxypyruvate to phosphoserine and of 3-hydroxy-2-oxo-4-phosphonooxybutanoate to phosphohydroxythreonine. The chain is Phosphoserine aminotransferase from Paraburkholderia phymatum (strain DSM 17167 / CIP 108236 / LMG 21445 / STM815) (Burkholderia phymatum).